Reading from the N-terminus, the 495-residue chain is Cytochrome P450 2E1 (495 aa).

298–303 lines the substrate pocket; it reads FAGTET. A heme-binding site is contributed by Cys-437.

Belongs to the cytochrome P450 family. In terms of assembly, interacts with chaperones HSP70 and HSP90; this interaction is required for initial targeting to mitochondria. Heme is required as a cofactor.

The protein resides in the endoplasmic reticulum membrane. It localises to the microsome membrane. It is found in the mitochondrion inner membrane. The catalysed reaction is an organic molecule + reduced [NADPH--hemoprotein reductase] + O2 = an alcohol + oxidized [NADPH--hemoprotein reductase] + H2O + H(+). The enzyme catalyses (5Z,8Z,11Z)-eicosatrienoate + reduced [NADPH--hemoprotein reductase] + O2 = 19-hydroxy-(5Z,8Z,11Z)-eicosatrienoate + oxidized [NADPH--hemoprotein reductase] + H2O + H(+). It catalyses the reaction (5Z,8Z,11Z,14Z,17Z)-eicosapentaenoate + reduced [NADPH--hemoprotein reductase] + O2 = 19-hydroxy-(5Z,8Z,11Z,14Z,17Z)-eicosapentaenoate + oxidized [NADPH--hemoprotein reductase] + H2O + H(+). It carries out the reaction (4Z,7Z,10Z,13Z,16Z,19Z)-docosahexaenoate + reduced [NADPH--hemoprotein reductase] + O2 = 21-hydroxy-(4Z,7Z,10Z,13Z,16Z,19Z)-docosahexaenoate + oxidized [NADPH--hemoprotein reductase] + H2O + H(+). The catalysed reaction is dodecanoate + reduced [NADPH--hemoprotein reductase] + O2 = 11-hydroxydodecanoate + oxidized [NADPH--hemoprotein reductase] + H2O + H(+). The enzyme catalyses tetradecanoate + reduced [NADPH--hemoprotein reductase] + O2 = 13-hydroxytetradecanoate + oxidized [NADPH--hemoprotein reductase] + H2O + H(+). It catalyses the reaction 4-nitrophenol + NADPH + O2 + H(+) = 4-nitrocatechol + NADP(+) + H2O. Its pathway is lipid metabolism; fatty acid metabolism. The omega-1 hydroxylase activity is stimulated by cytochrome b5. A cytochrome P450 monooxygenase involved in the metabolism of fatty acids. Mechanistically, uses molecular oxygen inserting one oxygen atom into a substrate, and reducing the second into a water molecule, with two electrons provided by NADPH via cytochrome P450 reductase (NADPH--hemoprotein reductase). Catalyzes the hydroxylation of carbon-hydrogen bonds. Hydroxylates fatty acids specifically at the omega-1 position displaying the highest catalytic activity for saturated fatty acids. May be involved in the oxidative metabolism of xenobiotics. The polypeptide is Cytochrome P450 2E1 (CYP2E1) (Sus scrofa (Pig)).